A 155-amino-acid chain; its full sequence is Small ribosomal subunit protein uS7c (155 aa).

This sequence belongs to the universal ribosomal protein uS7 family. As to quaternary structure, part of the 30S ribosomal subunit.

It is found in the plastid. The protein resides in the chloroplast. Its function is as follows. One of the primary rRNA binding proteins, it binds directly to 16S rRNA where it nucleates assembly of the head domain of the 30S subunit. The polypeptide is Small ribosomal subunit protein uS7c (rps7) (Sagittaria latifolia (Broadleaf arrowhead)).